The primary structure comprises 248 residues: Ribosomal RNA small subunit methyltransferase G (248 aa).

The tract at residues 1–23 (MFHVKHVGPVEPAAGDPEVPPVA) is disordered. S-adenosyl-L-methionine contacts are provided by residues glycine 93, leucine 98, 143–144 (AE), and arginine 161. Residues 226–248 (VVSARRAKPPHPKSARTGKAGTR) form a disordered region. The span at 230–248 (RRAKPPHPKSARTGKAGTR) shows a compositional bias: basic residues.

This sequence belongs to the methyltransferase superfamily. RNA methyltransferase RsmG family.

The protein localises to the cytoplasm. In terms of biological role, specifically methylates the N7 position of guanine in position 518 of 16S rRNA. This Mycolicibacterium paratuberculosis (strain ATCC BAA-968 / K-10) (Mycobacterium paratuberculosis) protein is Ribosomal RNA small subunit methyltransferase G.